A 67-amino-acid chain; its full sequence is Small ribosomal subunit protein eS31 (67 aa).

Cys-31, Cys-34, Cys-49, and Cys-52 together coordinate Zn(2+). Residues 31–52 (CPKCGAGVFMAEHLNRFACGKC) form a C4-type zinc finger.

It belongs to the eukaryotic ribosomal protein eS31 family. Part of the 30S ribosomal subunit. Requires Zn(2+) as cofactor.

This is Small ribosomal subunit protein eS31 from Methanococcus maripaludis (strain DSM 14266 / JCM 13030 / NBRC 101832 / S2 / LL).